A 432-amino-acid chain; its full sequence is ATP-dependent RNA helicase RhlB (432 aa).

The Q motif motif lies at 9–37 (QRFADLPLHAEVIQALNENGFEFCTPIQA). The Helicase ATP-binding domain maps to 40–219 (LPVLLKAKDI…YDHMNDPEKV (180 aa)). 53–60 (AQTGTGKT) provides a ligand contact to ATP. The DEAD box motif lies at 165-168 (DEAD). A Helicase C-terminal domain is found at 243–390 (KMRLLLTLME…VSRYDREALL (148 aa)). A disordered region spans residues 395–432 (TPVKIHRKHPTSRTRDGAKGAHRSGGARPPRHRTRRPS). Positions 423–432 (PPRHRTRRPS) are enriched in basic residues.

The protein belongs to the DEAD box helicase family. RhlB subfamily. Component of the RNA degradosome, which is a multiprotein complex involved in RNA processing and mRNA degradation.

It is found in the cytoplasm. The enzyme catalyses ATP + H2O = ADP + phosphate + H(+). In terms of biological role, DEAD-box RNA helicase involved in RNA degradation. Has RNA-dependent ATPase activity and unwinds double-stranded RNA. This Shewanella denitrificans (strain OS217 / ATCC BAA-1090 / DSM 15013) protein is ATP-dependent RNA helicase RhlB.